A 364-amino-acid chain; its full sequence is Dihydroorotate dehydrogenase (quinone) (364 aa).

FMN contacts are provided by residues 61–65 (AGYDK) and T85. K65 lines the substrate pocket. 110 to 114 (NRLGF) provides a ligand contact to substrate. N139 and N170 together coordinate FMN. Substrate is bound at residue N170. S173 serves as the catalytic Nucleophile. Residue N175 participates in substrate binding. Residues K215 and S243 each coordinate FMN. 244–245 (NT) serves as a coordination point for substrate. Residues G266, G295, and 316–317 (YT) each bind FMN.

The protein belongs to the dihydroorotate dehydrogenase family. Type 2 subfamily. In terms of assembly, monomer. The cofactor is FMN.

The protein resides in the cell membrane. The enzyme catalyses (S)-dihydroorotate + a quinone = orotate + a quinol. It functions in the pathway pyrimidine metabolism; UMP biosynthesis via de novo pathway; orotate from (S)-dihydroorotate (quinone route): step 1/1. In terms of biological role, catalyzes the conversion of dihydroorotate to orotate with quinone as electron acceptor. In Brucella canis (strain ATCC 23365 / NCTC 10854 / RM-666), this protein is Dihydroorotate dehydrogenase (quinone).